We begin with the raw amino-acid sequence, 508 residues long: MGLPWYRVHTVVLNDPGRLLAVHIMHTALVAGWAGSMALYELAVFDPSDPVLDPMWRQGMFVIPFMTRLGITNSWGGWNITGGTITNPGLWSYEGVAGAHIVFSGLCFLAAIWHWVYWDLEIFCDERTGKPSLDLPKIFGIHLFLSGVACFGFGAFHVTGLYGPGIWVSDPYGLTGKVQPVNPAWGVEGFDPFVPGGIASHHIAAGTLGILAGLFHLSVRPPQRLYKGLRMGNIETVLSSSIAAVFFAAFVVAGTMWYGSATTPIELFGPTRYQWDQGYFQQEIYRRVSAGLAENQSLSEAWAKIPEKLAFYDYIGNNPAKGGLFRAGSMDNGDGIAVGWLGHPVFRNKEGRELFVRRMPTFFETFPVVLVDGDGIVRADVPFRRAESKYSVEQVGVTVEFYGGELNGVSYSDPATVKKYARRAQLGEIFELDRATLKSDGVFRSSPRGWFTFGHASFALLFFFGHIWHGARTLFRDVFAGIDPDLDAQVEFGAFQKLGDPTTKRQAV.

A run of 6 helical transmembrane segments spans residues 21-36 (AVHI…WAGS), 101-115 (IVFS…IWHW), 140-156 (GIHL…FGAF), 203-218 (IAAG…FHLS), 237-252 (VLSS…AFVV), and 457-472 (SFAL…HGAR).

The protein belongs to the PsbB/PsbC family. PsbB subfamily. In terms of assembly, PSII is composed of 1 copy each of membrane proteins PsbA, PsbB, PsbC, PsbD, PsbE, PsbF, PsbH, PsbI, PsbJ, PsbK, PsbL, PsbM, PsbT, PsbX, PsbY, PsbZ, Psb30/Ycf12, at least 3 peripheral proteins of the oxygen-evolving complex and a large number of cofactors. It forms dimeric complexes. Interacts with PAM68. Interacts with HHL1. The cofactor is Binds multiple chlorophylls. PSII binds additional chlorophylls, carotenoids and specific lipids..

The protein localises to the plastid. It localises to the chloroplast thylakoid membrane. Functionally, one of the components of the core complex of photosystem II (PSII). It binds chlorophyll and helps catalyze the primary light-induced photochemical processes of PSII. PSII is a light-driven water:plastoquinone oxidoreductase, using light energy to abstract electrons from H(2)O, generating O(2) and a proton gradient subsequently used for ATP formation. The sequence is that of Photosystem II CP47 reaction center protein from Arabidopsis thaliana (Mouse-ear cress).